The sequence spans 215 residues: MKPFTQHTGLVCPLDRVNVDTDQIIPKQFLKSIKRTGFGPNLFDEWRYLDAGQPGQDNSKRPINSDFVLNFPRYRGASVLLARDNFGCGSSREHAAWALDEYGFRTVIAPSFADIFFNNSFKNGLLPLVLNKVEVDALFAQCQVTEGYTLTVDLAAQQVITLDGTTYAFQIDTFRKHCLLNGLDDIGLTLQHAEAIRAFEATHRIRQPWLFAPLR.

Belongs to the LeuD family. LeuD type 1 subfamily. In terms of assembly, heterodimer of LeuC and LeuD.

The catalysed reaction is (2R,3S)-3-isopropylmalate = (2S)-2-isopropylmalate. Its pathway is amino-acid biosynthesis; L-leucine biosynthesis; L-leucine from 3-methyl-2-oxobutanoate: step 2/4. Catalyzes the isomerization between 2-isopropylmalate and 3-isopropylmalate, via the formation of 2-isopropylmaleate. This Xylella fastidiosa (strain M23) protein is 3-isopropylmalate dehydratase small subunit.